Consider the following 708-residue polypeptide: Double-strand break repair protein MRE11 (708 aa).

The residue at position 2 (Ser2) is an N-acetylserine. Ser2 bears the Phosphoserine mark. Mn(2+) is bound by residues Asp20, His22, and Asp60. An interaction with NBN region spans residues 87 to 117; the sequence is RPVQFEILSDQSVNFGFSKFPWVNYQDGNLN. A Mn(2+)-binding site is contributed by Asn128. His129 (proton donor) is an active-site residue. 3 residues coordinate Mn(2+): His217, His245, and His247. Residue Lys255 forms a Glycyl lysine isopeptide (Lys-Gly) (interchain with G-Cter in SUMO2) linkage. Residue Ser275 is modified to Phosphoserine. Lys282 participates in a covalent cross-link: Glycyl lysine isopeptide (Lys-Gly) (interchain with G-Cter in UFM1). Lys339 is covalently cross-linked (Glycyl lysine isopeptide (Lys-Gly) (interchain with G-Cter in ubiquitin)). Residue Lys384 forms a Glycyl lysine isopeptide (Lys-Gly) (interchain with G-Cter in SUMO) linkage. Residue Lys416 forms a Glycyl lysine isopeptide (Lys-Gly) (interchain with G-Cter in SUMO2) linkage. Residue Lys467 forms a Glycyl lysine isopeptide (Lys-Gly) (interchain with G-Cter in SUMO) linkage. Lys480 is covalently cross-linked (Glycyl lysine isopeptide (Lys-Gly) (interchain with G-Cter in ubiquitin)). Disordered stretches follow at residues 507–540 and 556–614; these read TRQKNTNEEDDEVREAMTRARALRSQSEESASAF and NDSD…AVSA. Over residues 569 to 579 the composition is skewed to basic residues; sequence GRGRGRGRRGG. 9 positions are modified to asymmetric dimethylarginine: Arg570, Arg572, Arg574, Arg576, Arg577, Arg580, Arg587, Arg592, and Arg594. A GAR motif is present at residues 570-594; it reads RGRGRGRRGGRGQNSASRGGSQRGR. A compositionally biased stretch (polar residues) spans 599–614; the sequence is LETSTRSRNSKTAVSA. Phosphoserine is present on Ser619. Residue Lys625 forms a Glycyl lysine isopeptide (Lys-Gly) (interchain with G-Cter in SUMO2) linkage. A Phosphoserine modification is found at Ser641. Ser649 carries the post-translational modification Phosphoserine; by PLK1. A disordered region spans residues 651–708; sequence VEEDIFPTTSKTDQRWSSTSSSKIMSQSQVSKGVDFESSEDDDDDPFMNTSSLRRNRR. Residues 667–681 show a composition bias toward low complexity; that stretch reads SSTSSSKIMSQSQVS. Lys673 carries the post-translational modification N6-lactoyllysine. Phosphoserine; by ATM occurs at positions 676 and 678. The segment covering 687–696 has biased composition (acidic residues); that stretch reads ESSEDDDDDP. Ser688 is subject to Phosphoserine; by CDK2. 2 positions are modified to phosphoserine: Ser689 and Ser701. The segment covering 698–708 has biased composition (polar residues); that stretch reads MNTSSLRRNRR.

This sequence belongs to the MRE11/RAD32 family. In terms of assembly, component of the MRN complex composed of two heterodimers RAD50 and MRE11 associated with a single NBN. The MRN complexes dimerize on DNA to form joined MRN-MRN oligomers required for DNA double-strand break repair. As part of the MRN complex, interacts with MCM9; the interaction recruits the complex to DNA repair sites. Component of the BASC complex, at least composed of BRCA1, MSH2, MSH6, MLH1, ATM, BLM, RAD50, MRE11 and NBN. Found in a complex with TERF2. Interacts with DCLRE1C/Artemis and DCLRE1B/Apollo. Interacts with ATF2. Interacts with EXD2. Interacts with MRNIP. Interacts with SAMHD1; leading to stimulate 3'-5' exonuclease activity. Interacts (when ubiquitinated) with UBQLN4 (via its UBA domain). Interacts with CYREN (via XLF motif). Interacts with GFI1; promoting methylation by PRMT1. Interacts with DYNLL1; inhibiting the activity of MRE11. Interacts with C1QBP and RAD50; interaction takes place in absence of DNA damage to form the MRC (MRE11-RAD50-C1QBP) complex that inhibits the activity of MRE11. Interacts with AGER/RAGE. AGER is recruited to DNA double-strand break sites where it enhances MRE11 endonuclease activity to promote DNA repair. As to quaternary structure, (Microbial infection) Interacts with herpes simplex virus 1 protein UL12. It depends on Mn(2+) as a cofactor. Post-translationally, phosphorylated by ATM at Ser-676 and Ser-678 in response to DNA damage, promoting MRE11 activity: phosphorylation activates MRE11 by preventing the interaction between MRE11 and the C1QBP inhibitor. Phosphorylation at Ser-649 by PLK1 primes for phosphorylation at Ser-688 by CK2, inhibiting recruitment of the MRN complex to DNA damage sites. Asymmetric dimethylation by PRMT1 promotes MRE11 exonuclease activity. In terms of processing, lactylation at Lys-673 by CREBBP/CBP in response to DNA damage promotes DNA binding and MRE11 activity. Post-translationally, acetylated on lysine residues by KAT2A /GCN5. Ubiquitinated following DNA damage. Ubiquitination triggers interaction with UBQLN4, leading to MRE11 removal from chromatin and degradation by the proteasome. Ubiquitinated at Lys-339 and Lys-480 by RNF126 via 'Lys-27'- and 'Lys-29'-linked polyubiquitin chains, promoting the exonuclease activity of MRE11. In terms of processing, SUMOylated by PIAS1, stabilizing MRE11 on chromatin during end resection. DeSUMOylated by SENP3 following removal from DNA double-strand breaks (DSBs). Post-translationally, ufmylation at Lys-282 promotes MRE11 activity and is required for activation of the ATM and ATR kinases by the MRN complex. (Microbial infection) Following infection by adenovirus E4, ubiquitinated and degraded by a SCF-like E3 ubiquitin ligase complex containing viral proteins E1B-55K and E4-ORF6.

The protein localises to the nucleus. The protein resides in the chromosome. It localises to the telomere. Interaction with SAMHD1 stimulates the double-strand-specific 3'-5' exonuclease activity. RBBP8/CtIP specifically promotes the endonuclease activity to clear protein-DNA adducts and generate clean double-strand break ends. DYNLL1-binding inhibits the activity of MRE11. MRE11 activity is inhibited by C1QBP: in absence of DNA damage, C1QBP interacts with unphosphorylated MRE11, preventing formation and activity of the MRN complex. The mirin-derivative PFM39, specifically inhibits the 3'-5' exonuclease activity. The N-alkylated mirin-derivatives PFM03 and PFM01 specifically inhibit the endonuclease activity. Core component of the MRN complex, which plays a central role in double-strand break (DSB) repair, DNA recombination, maintenance of telomere integrity and meiosis. The MRN complex is involved in the repair of DNA double-strand breaks (DSBs) via homologous recombination (HR), an error-free mechanism which primarily occurs during S and G2 phases. The complex (1) mediates the end resection of damaged DNA, which generates proper single-stranded DNA, a key initial steps in HR, and is (2) required for the recruitment of other repair factors and efficient activation of ATM and ATR upon DNA damage. Within the MRN complex, MRE11 possesses both single-strand endonuclease activity and double-strand-specific 3'-5' exonuclease activity. After DSBs, MRE11 is loaded onto DSBs sites and cleaves DNA by cooperating with RBBP8/CtIP to initiate end resection. MRE11 first endonucleolytically cleaves the 5' strand at DNA DSB ends to prevent non-homologous end joining (NHEJ) and licence HR. It then generates a single-stranded DNA gap via 3' to 5' exonucleolytic degradation to create entry sites for EXO1- and DNA2-mediated 5' to 3' long-range resection, which is required for single-strand invasion and recombination. RBBP8/CtIP specifically promotes the endonuclease activity of MRE11 to clear protein-DNA adducts and generate clean double-strand break ends. MRE11 endonuclease activity is also enhanced by AGER/RAGE. The MRN complex is also required for DNA damage signaling via activation of the ATM and ATR kinases: the nuclease activity of MRE11 is not required to activate ATM and ATR. The MRN complex is also required for the processing of R-loops. The MRN complex is involved in the activation of the cGAS-STING pathway induced by DNA damage during tumorigenesis: the MRN complex acts by displacing CGAS from nucleosome sequestration, thereby activating it. In telomeres the MRN complex may modulate t-loop formation. In terms of biological role, MRE11 contains two DNA-binding domains (DBDs), enabling it to bind both single-stranded DNA (ssDNA) and double-stranded DNA (dsDNA). The protein is Double-strand break repair protein MRE11 of Homo sapiens (Human).